Consider the following 489-residue polypeptide: CBL-interacting serine/threonine-protein kinase 12 (489 aa).

The 255-residue stretch at 26–280 (YEMGKLLGHG…FPEIMENSWF (255 aa)) folds into the Protein kinase domain. ATP contacts are provided by residues 32 to 40 (LGHGTFAKV) and K55. The active-site Proton acceptor is D148. The tract at residues 166 to 195 (DFGLSAVSDQIRQDGLFHTFCGTPAYVAPE) is activation loop. A Phosphoserine modification is found at S170. Phosphothreonine is present on T184. In terms of domain architecture, NAF spans 336-360 (PRPASLNAFDIISFSQGFDLSGLFD). The segment at 363-392 (GEGSRFVSGAPVSKIISKLEEIAKVVSFTV) is PPI.

It belongs to the protein kinase superfamily. CAMK Ser/Thr protein kinase family. SNF1 subfamily. Interacts with CBL2 and CBL3. The cofactor is Mn(2+). As to expression, expressed in roots and shoots.

The enzyme catalyses L-seryl-[protein] + ATP = O-phospho-L-seryl-[protein] + ADP + H(+). The catalysed reaction is L-threonyl-[protein] + ATP = O-phospho-L-threonyl-[protein] + ADP + H(+). Functionally, CIPK serine-threonine protein kinases interact with CBL proteins. Binding of a CBL protein to the regulatory NAF domain of CIPK protein lead to the activation of the kinase in a calcium-dependent manner. This is CBL-interacting serine/threonine-protein kinase 12 (CIPK12) from Arabidopsis thaliana (Mouse-ear cress).